The following is a 212-amino-acid chain: Probable nicotinate-nucleotide adenylyltransferase (212 aa).

The protein belongs to the NadD family.

The catalysed reaction is nicotinate beta-D-ribonucleotide + ATP + H(+) = deamido-NAD(+) + diphosphate. Its pathway is cofactor biosynthesis; NAD(+) biosynthesis; deamido-NAD(+) from nicotinate D-ribonucleotide: step 1/1. In terms of biological role, catalyzes the reversible adenylation of nicotinate mononucleotide (NaMN) to nicotinic acid adenine dinucleotide (NaAD). The chain is Probable nicotinate-nucleotide adenylyltransferase from Shewanella sp. (strain MR-4).